The primary structure comprises 904 residues: Polycystin-2 (904 aa).

The tract at residues 1–102 (MSSSRVRPQA…SSSGGVPGNF (102 aa)) is disordered. Over 1–155 (MSSSRVRPQA…NSNREMYLKT (155 aa)) the chain is Cytoplasmic. Residues 8–20 (PQAPQSPAASASA) are compositionally biased toward low complexity. Residues 26 to 38 (EGIEMEKMHHEEV) are compositionally biased toward basic and acidic residues. The segment covering 86–96 (SVSTTSSSSSG) has biased composition (low complexity). The chain crosses the membrane as a helical span at residues 156 to 177 (VLREMITYILFLLTLCIITYGM). Over 178–404 (VSTNMYYYTK…TVRLLRYVSS (227 aa)) the chain is Extracellular. N-linked (GlcNAc...) asparagine glycans are attached at residues asparagine 235, asparagine 241, and asparagine 264. Cysteine 267 and cysteine 280 are joined by a disulfide. A glycan (N-linked (GlcNAc...) asparagine) is linked at asparagine 298. A helical membrane pass occupies residues 405–425 (WDYFVGMCEVSFCLFVLYYLV). Over 426-441 (EEALEIRLHRLRYFKS) the chain is Cytoplasmic. The chain crosses the membrane as a helical span at residues 442-462 (LWNCLDVLIVALSVPAIIMNI). Topologically, residues 463–489 (CRTSAVSHRLHFLLENHSTYPNFEPLA) are extracellular. N-linked (GlcNAc...) asparagine glycosylation occurs at asparagine 478. A helical transmembrane segment spans residues 490–510 (RLQVHFNNLAAIIVFLSWVKL). Topologically, residues 511 to 534 (FKFINFNKTMNQLSTTMSRCAKDL) are cytoplasmic. A helical membrane pass occupies residues 535 to 556 (MGFAIMFFIVFLAYAQLAYLVF). The Extracellular portion of the chain corresponds to 557 to 568 (GTQVNDFSTFQA). Positions 569 to 583 (CIFTQFRIILGDFDF) form an intramembrane region, pore-forming. A Ca(2+)-binding site is contributed by leucine 578. A Selectivity filter motif is present at residues 578 to 580 (LGD). Over 584–591 (SEIEEADS) the chain is Extracellular. A helical membrane pass occupies residues 592 to 612 (VLGPIYFTTFVFFIFMILLNM). Residues 613–904 (FLAIINDTYS…DAAASGPAHL (292 aa)) are Cytoplasmic-facing. One can recognise an EF-hand 1 domain in the interval 687–722 (HSDAEIEAIFAKYDLDGDQELTEHEHQQMRDDLEKE). Ca(2+)-binding residues include aspartate 700, aspartate 702, aspartate 704, glutamate 706, and glutamate 711. A compositionally biased stretch (basic and acidic residues) spans 708–732 (TEHEHQQMRDDLEKEREDLDLEHSS). Disordered stretches follow at residues 708–770 (TEHE…SSGG) and 854–904 (ESDD…PAHL). The segment at 740–759 (RSFSRSQDDSEEDDDEDSGH) is linker. One can recognise an EF-hand 2 domain in the interval 768–786 (SGGVSYEEFQVLVRRVDRM). Residues 770 to 809 (GVSYEEFQVLVRRVDRMEHSIGSIVSKIDAVIVKLEAMER) are a coiled coil. Residues 878-890 (LRPRSSRPPSSLS) are compositionally biased toward low complexity.

Belongs to the polycystin family. In terms of assembly, homotetramer. Component of the heterotetrameric polycystin channel complex with pkd1; the tetramer contains one pkd1 chain and three pkd2 chains. Interacts with pkd1l1. Post-translationally, phosphorylated. Phosphorylation is important for protein function; a mutant human construct that lacks the N-terminal phosphorylation sites cannot complement a zebrafish pkd2-deficient mutant. N-glycosylated. The four subunits in a tetramer probably differ in the extent of glycosylation; simultaneous glycosylation of all experimentally validated sites would probably create steric hindrance. In terms of processing, sumoylated by SUMO1; sumoylation regulates PKD2 membrane recycling. As to expression, detected along cilia and at the cilium basal body in Kupffer's vesicle at the 10 somite stage. Detected in heart at 48hpf. Detected in muscle and pronephric kidney at 48 hpf. Detected on trunk muscle sarcolemma and sarcomere, on ependymal cell cilia in brain, at the apical cell membrane in epithelial cells in the ear, at the lateral line organ and olfactory placode at 56 hpf. Detected in adult kidney (at protein level).

It localises to the basolateral cell membrane. The protein localises to the cell membrane. The protein resides in the sarcolemma. Its subcellular location is the cytoplasm. It is found in the myofibril. It localises to the sarcomere. The protein localises to the sarcoplasmic reticulum membrane. The protein resides in the apical cell membrane. Its subcellular location is the endoplasmic reticulum membrane. It is found in the cell projection. It localises to the cilium. The protein localises to the cytoskeleton. The protein resides in the cilium basal body. Its subcellular location is the cytoplasmic vesicle membrane. It catalyses the reaction K(+)(in) = K(+)(out). The catalysed reaction is Na(+)(in) = Na(+)(out). It carries out the reaction Ca(2+)(in) = Ca(2+)(out). Its activity is regulated as follows. Channel activity is regulated by phosphorylation. Channel activity is regulated by intracellular Ca(2+). Functionally, forms a nonselective cation channel. Can function as a homotetrameric ion channel or can form heteromer with PKD1. Displays distinct function depending on its subcellular localization and regulation by its binding partners. In the primary cilium functions as a cation channel, with a preference for monovalent cations over divalent cations that allows K(+), Na(+) and Ca(2+) influx, with low selectivity for Ca(2+). In the endoplasmic reticulum, likely functions as a K(+) channel to facilitate Ca(2+) release. Required for normal oscillation of Ca(2+) levels within cilia; these oscillations of the intraciliary Ca(2+) levels can trigger cytoplasmic Ca(2+) signaling cascades. Required for normal temporal variation of the intracellular Ca(2+) levels in the heart. Plays a role in fluid-flow mechanosensation. Required for normal specification of the body left-right axis during embryogenesis, most likely via its role in ciliary Ca(2+) oscillations in Kupffer's vesicle. The protein is Polycystin-2 of Danio rerio (Zebrafish).